The sequence spans 388 residues: GTPase Obg (388 aa).

The 159-residue stretch at 1 to 159 (MKFVDEATIR…RSLRLELMLL (159 aa)) folds into the Obg domain. The 174-residue stretch at 160-333 (ADVGLLGMPN…LALKLLDFID (174 aa)) folds into the OBG-type G domain. GTP contacts are provided by residues 166 to 173 (GMPNAGKS), 191 to 195 (FTTLV), 213 to 216 (DIPG), 283 to 286 (NKAD), and 314 to 316 (SAY). Mg(2+) contacts are provided by Ser173 and Thr193. A disordered region spans residues 356-377 (QNANESVNEDYDDDLDDDDYDD). Positions 362–377 (VNEDYDDDLDDDDYDD) are enriched in acidic residues.

This sequence belongs to the TRAFAC class OBG-HflX-like GTPase superfamily. OBG GTPase family. As to quaternary structure, monomer. Requires Mg(2+) as cofactor.

It localises to the cytoplasm. In terms of biological role, an essential GTPase which binds GTP, GDP and possibly (p)ppGpp with moderate affinity, with high nucleotide exchange rates and a fairly low GTP hydrolysis rate. Plays a role in control of the cell cycle, stress response, ribosome biogenesis and in those bacteria that undergo differentiation, in morphogenesis control. The polypeptide is GTPase Obg (Shewanella piezotolerans (strain WP3 / JCM 13877)).